The primary structure comprises 357 residues: Probable glutamine amidotransferase DUG3 (357 aa).

The For GATase activity role is filled by Cys2. The Glutamine amidotransferase type-2 domain maps to 2–260 (CRFLIFKGKQ…PGEYRVERLD (259 aa)).

This sequence belongs to the DUG3 family. As to quaternary structure, component of the GSH degradosomal complex composed of at least DUG1, DUG2 and DUG3.

Its subcellular location is the cytoplasm. Its function is as follows. Component of the GSH degradosomal complex involved in the degradation of glutathione (GSH) and other peptides containing a gamma-glu-X bond. This chain is Probable glutamine amidotransferase DUG3 (DUG3), found in Saccharomyces cerevisiae (strain ATCC 204508 / S288c) (Baker's yeast).